Reading from the N-terminus, the 226-residue chain is Sugar fermentation stimulation protein homolog (226 aa).

Belongs to the SfsA family.

This chain is Sugar fermentation stimulation protein homolog, found in Ruminiclostridium cellulolyticum (strain ATCC 35319 / DSM 5812 / JCM 6584 / H10) (Clostridium cellulolyticum).